Here is a 512-residue protein sequence, read N- to C-terminus: Serine/threonine-protein kinase SSN3 (512 aa).

Disordered regions lie at residues Met-1–Trp-22 and Ala-75–Met-94. The Protein kinase domain maps to Tyr-106–Phe-455. Residues Ile-112 to Val-120 and Lys-136 each bind ATP. The active-site Proton acceptor is Asp-238. Disordered regions lie at residues Gln-368 to Ala-388 and Arg-476 to Gly-512. The span at His-373–Gln-382 shows a compositional bias: basic residues. Composition is skewed to basic and acidic residues over residues Arg-476–Ile-485 and Gly-497–Gly-512.

It belongs to the protein kinase superfamily. CMGC Ser/Thr protein kinase family. CDC2/CDKX subfamily. As to quaternary structure, component of the SRB8-11 complex, a regulatory module of the Mediator complex. It depends on Mg(2+) as a cofactor.

The protein resides in the nucleus. It carries out the reaction L-seryl-[protein] + ATP = O-phospho-L-seryl-[protein] + ADP + H(+). The enzyme catalyses L-threonyl-[protein] + ATP = O-phospho-L-threonyl-[protein] + ADP + H(+). It catalyses the reaction [DNA-directed RNA polymerase] + ATP = phospho-[DNA-directed RNA polymerase] + ADP + H(+). Functionally, component of the SRB8-11 complex. The SRB8-11 complex is a regulatory module of the Mediator complex which is itself involved in regulation of basal and activated RNA polymerase II-dependent transcription. The SRB8-11 complex may be involved in the transcriptional repression of a subset of genes regulated by Mediator. It may inhibit the association of the Mediator complex with RNA polymerase II to form the holoenzyme complex. The SRB8-11 complex phosphorylates the C-terminal domain (CTD) of the largest subunit of RNA polymerase II. The protein is Serine/threonine-protein kinase SSN3 (SSN3) of Chaetomium globosum (strain ATCC 6205 / CBS 148.51 / DSM 1962 / NBRC 6347 / NRRL 1970) (Soil fungus).